Here is a 512-residue protein sequence, read N- to C-terminus: Histidine ammonia-lyase (512 aa).

The 5-imidazolinone (Ala-Gly) cross-link spans 142–144 (ASG). S143 carries the 2,3-didehydroalanine (Ser) modification.

It belongs to the PAL/histidase family. In terms of processing, contains an active site 4-methylidene-imidazol-5-one (MIO), which is formed autocatalytically by cyclization and dehydration of residues Ala-Ser-Gly.

The protein localises to the cytoplasm. The catalysed reaction is L-histidine = trans-urocanate + NH4(+). Its pathway is amino-acid degradation; L-histidine degradation into L-glutamate; N-formimidoyl-L-glutamate from L-histidine: step 1/3. The polypeptide is Histidine ammonia-lyase (Bartonella tribocorum (strain CIP 105476 / IBS 506)).